The sequence spans 444 residues: Enolase (444 aa).

Residues histidine 163 and glutamate 172 each contribute to the substrate site. Residue glutamate 215 is the Proton donor of the active site. Mg(2+)-binding residues include aspartate 250, glutamate 300, and aspartate 327. Substrate contacts are provided by glutamate 300 and aspartate 327. Lysine 352 acts as the Proton acceptor in catalysis. Substrate is bound by residues 379–382 (SHRS) and lysine 403.

It belongs to the enolase family. In terms of assembly, homodimer. Mg(2+) is required as a cofactor.

The protein localises to the cytoplasm. The catalysed reaction is (2R)-2-phosphoglycerate = phosphoenolpyruvate + H2O. It participates in carbohydrate degradation; glycolysis; pyruvate from D-glyceraldehyde 3-phosphate: step 4/5. The polypeptide is Enolase (PGH1) (Mesembryanthemum crystallinum (Common ice plant)).